A 229-amino-acid polypeptide reads, in one-letter code: 2-C-methyl-D-erythritol 4-phosphate cytidylyltransferase (229 aa).

It belongs to the IspD/TarI cytidylyltransferase family. IspD subfamily.

The enzyme catalyses 2-C-methyl-D-erythritol 4-phosphate + CTP + H(+) = 4-CDP-2-C-methyl-D-erythritol + diphosphate. It participates in isoprenoid biosynthesis; isopentenyl diphosphate biosynthesis via DXP pathway; isopentenyl diphosphate from 1-deoxy-D-xylulose 5-phosphate: step 2/6. Catalyzes the formation of 4-diphosphocytidyl-2-C-methyl-D-erythritol from CTP and 2-C-methyl-D-erythritol 4-phosphate (MEP). In Neisseria meningitidis serogroup C (strain 053442), this protein is 2-C-methyl-D-erythritol 4-phosphate cytidylyltransferase.